The chain runs to 403 residues: Serine/threonine transporter SstT (403 aa).

Helical transmembrane passes span 16–36, 45–65, 79–99, 138–158, 175–195, 214–234, 295–315, 327–347, and 353–373; these read QIVIGLIAGIALALLAPAIAL, FVSALKAVAPVLVFILVMASI, ILWLYLLGTFSAAVVAVVASM, ALLNANFIGVLTWAIGLGVAL, GVTLIVRVVIRFAPLGIFGLV, LAVLIGCMLFVALVMNPLIVF, MAGAAITITVLTLAAVHTLGI, MVAAVCACGASGVAGGSLLLI, and LFGIPSEIAMQVVAVGFIIGV.

This sequence belongs to the dicarboxylate/amino acid:cation symporter (DAACS) (TC 2.A.23) family.

Its subcellular location is the cell inner membrane. It carries out the reaction L-serine(in) + Na(+)(in) = L-serine(out) + Na(+)(out). The catalysed reaction is L-threonine(in) + Na(+)(in) = L-threonine(out) + Na(+)(out). Involved in the import of serine and threonine into the cell, with the concomitant import of sodium (symport system). The polypeptide is Serine/threonine transporter SstT (Pseudomonas putida (strain W619)).